We begin with the raw amino-acid sequence, 288 residues long: Protease HtpX homolog (288 aa).

A run of 2 helical transmembrane segments spans residues 1-21 (MHTI…LLAG) and 23-43 (IIGG…MNFF). H130 lines the Zn(2+) pocket. Residue E131 is part of the active site. H134 serves as a coordination point for Zn(2+). 2 consecutive transmembrane segments (helical) span residues 140 to 160 (ILIS…AEMA) and 175 to 195 (IGGL…AMII). A Zn(2+)-binding site is contributed by E204.

This sequence belongs to the peptidase M48B family. The cofactor is Zn(2+).

Its subcellular location is the cell inner membrane. The protein is Protease HtpX homolog of Persephonella marina (strain DSM 14350 / EX-H1).